The chain runs to 641 residues: DNA primase (641 aa).

A CHC2-type zinc finger spans residues 41-65 (CPFHDEKSPSFQVSPSKGFFHCFGC). In terms of domain architecture, Toprim spans 262-346 (SRAVVVEGYT…AAETYIAIAP (85 aa)). Positions 268, 317, and 319 each coordinate Mg(2+). Residues 444–478 (RDRGGKGPAPDQRQRGGGPQQQAGPMTATPRGPAL) are disordered.

This sequence belongs to the DnaG primase family. In terms of assembly, monomer. Interacts with DnaB. Zn(2+) is required as a cofactor. Requires Mg(2+) as cofactor.

It carries out the reaction ssDNA + n NTP = ssDNA/pppN(pN)n-1 hybrid + (n-1) diphosphate.. Its function is as follows. RNA polymerase that catalyzes the synthesis of short RNA molecules used as primers for DNA polymerase during DNA replication. The polypeptide is DNA primase (Streptomyces coelicolor (strain ATCC BAA-471 / A3(2) / M145)).